The sequence spans 435 residues: Gamma-glutamyl phosphate reductase (435 aa).

This sequence belongs to the gamma-glutamyl phosphate reductase family.

It localises to the cytoplasm. It carries out the reaction L-glutamate 5-semialdehyde + phosphate + NADP(+) = L-glutamyl 5-phosphate + NADPH + H(+). It participates in amino-acid biosynthesis; L-proline biosynthesis; L-glutamate 5-semialdehyde from L-glutamate: step 2/2. Catalyzes the NADPH-dependent reduction of L-glutamate 5-phosphate into L-glutamate 5-semialdehyde and phosphate. The product spontaneously undergoes cyclization to form 1-pyrroline-5-carboxylate. The chain is Gamma-glutamyl phosphate reductase from Aquifex aeolicus (strain VF5).